The chain runs to 353 residues: Tetrahedral aminopeptidase (353 aa).

Zn(2+) is bound by residues His68 and Asp182. The active-site Proton acceptor is Glu212. Residues Glu213, Asp235, and His323 each coordinate Zn(2+).

This sequence belongs to the peptidase M42 family. Homododecamer. The assembly of six dimers results in a tetrahedral-shaped structure; all 12 active sites are located on the inside of the tetrahedron. Substrate access is granted by four pores with a maximal diameter of 18 Angstroms, allowing only small peptides and unfolded proteins access to the active site. Beside the four entry ports, TET contains 12 small product release openings, which are large enough to allow passage of only single amino acid residues. It depends on Zn(2+) as a cofactor. The cofactor is Co(2+).

Inhibited by EDTA and bestatin in vitro. Is insensitive to papain, antipain, chymostatin, leupeptin, pepstatin and aprotinin. Functionally, functions as an aminopeptidase, with a clear preference for leucine as the N-terminal amino acid. However, can also cleave moderately long polypeptide substrates of various compositions in a fairly unspecific manner. Has neither carboxypeptidase nor endoproteolytic activities, and it is devoid of N-terminal deblocking activity. Is involved in protein degradation, performing degradation of oligopeptides produced by the proteasome into single amino acids. The chain is Tetrahedral aminopeptidase (frvX) from Pyrococcus horikoshii (strain ATCC 700860 / DSM 12428 / JCM 9974 / NBRC 100139 / OT-3).